We begin with the raw amino-acid sequence, 234 residues long: MKIIKVKDQVEGGKEALKVFKEALDSGVKVFGLATGSTPETTYDELVKSDIDFSNSISVNLDEYVGLKPEDEQSYAYFMKEHLFNAKPFAKSFLPNGMAEDADQECERYDKLLEEYHVGLQLLGIGRNGHIGFNEPGSSFDGKTHKVALTQSTINANSRFFDNEEDVPKYAYSMGIGTIMKSDTILLEAFGKNKAEAVKAMIEGPVTPEVPASVLQNHPDVVVIIDEEAASLLK.

The active-site Proton acceptor; for enolization step is aspartate 62. Catalysis depends on asparagine 128, which acts as the For ring-opening step. Catalysis depends on histidine 130, which acts as the Proton acceptor; for ring-opening step. Glutamate 135 acts as the For ring-opening step in catalysis.

The protein belongs to the glucosamine/galactosamine-6-phosphate isomerase family. NagB subfamily.

It carries out the reaction alpha-D-glucosamine 6-phosphate + H2O = beta-D-fructose 6-phosphate + NH4(+). It functions in the pathway amino-sugar metabolism; N-acetylneuraminate degradation; D-fructose 6-phosphate from N-acetylneuraminate: step 5/5. Its function is as follows. Catalyzes the reversible isomerization-deamination of glucosamine 6-phosphate (GlcN6P) to form fructose 6-phosphate (Fru6P) and ammonium ion. The polypeptide is Glucosamine-6-phosphate deaminase (Ligilactobacillus salivarius (strain UCC118) (Lactobacillus salivarius)).